The sequence spans 503 residues: WAS/WASL-interacting protein family member 1 (503 aa).

The segment covering 1 to 14 (MPVPPPPAPPPPPT) has biased composition (pro residues). The disordered stretch occupies residues 1-503 (MPVPPPPAPP…GAPPLPPIPR (503 aa)). Residues 21-31 (EKPTLNKTEQA) are compositionally biased toward polar residues. A WH2 domain is found at 32-49 (GRNALLSDISKGKKLKKT). R33 is subject to Asymmetric dimethylarginine. The interval 45-48 (KLKK) is binds actin. Residues 65 to 104 (AGAGGGGGGFGGGGGFGGGGGGGGGGSFGGGGPPGLGGLF) are compositionally biased toward gly residues. Positions 121–137 (SGGSRPPLLPPGGRSTS) are enriched in low complexity. Residues R125 and R134 each carry the omega-N-methylarginine modification. 4 stretches are compositionally biased toward pro residues: residues 141 to 154 (FSPP…PVPS), 161 to 174 (PPEP…PPRP), 182 to 191 (SIPPPVPSTP), and 204 to 223 (PPVP…PPFP). Residue S142 is modified to Phosphoserine. The residue at position 234 (S234) is a Phosphoserine. Residues 238-247 (SPLSSSSPFS) show a composition bias toward low complexity. Pro residues-rich tracts occupy residues 282 to 298 (VPPP…PSTP) and 306 to 323 (APPP…PLPP). S340 bears the Phosphoserine mark. Phosphothreonine is present on T345. Positions 346 to 371 (PPLPSPGRSGPLPPPPSERPPPPVRD) are enriched in pro residues. S350 is modified (phosphoserine). XRSGPXPPXP motif repeat units follow at residues 352 to 361 (GRSGPLPPPP), 374 to 383 (GRSGPLPPPP), and 410 to 419 (PRSGPRPPLP). A compositionally biased stretch (pro residues) spans 413-434 (GPRPPLPPDRPSAGAPPPPPPS). Over residues 480–494 (ARNESRSGSNRRERG) the composition is skewed to basic and acidic residues.

The protein belongs to the verprolin family. In terms of assembly, binds to WAS, profilin and actin. Binds to WASL. Interacts with DBNL. Interacts with FNBP1L (via the SH3 domain). As to expression, highly expressed in peripheral blood mononuclear cells, spleen, placenta, small intestine, colon and thymus. Lower expression in ovary, heart, brain, lung, liver, skeletal muscle, kidney, pancreas, prostate and testis.

The protein resides in the cytoplasmic vesicle. The protein localises to the cytoplasm. Its subcellular location is the cytoskeleton. It is found in the cell projection. It localises to the ruffle. Functionally, plays a role in the reorganization of the actin cytoskeleton. Contributes with NCK1 and GRB2 in the recruitment and activation of WASL. May participate in regulating the subcellular localization of WASL, resulting in the disassembly of stress fibers in favor of filopodia formation. Plays a role in the formation of cell ruffles. Plays an important role in the intracellular motility of vaccinia virus by functioning as an adapter for recruiting WASL to vaccinia virus. The polypeptide is WAS/WASL-interacting protein family member 1 (WIPF1) (Homo sapiens (Human)).